Reading from the N-terminus, the 532-residue chain is MWKFAIHSQQPFCWQQLCNRRHLYVGNVQQQTHLELLDAAPTRSDDEWLQAKPYEKVPGPGTWQVLSYFLPGGKQYNTNLIQMNRRMREWYGDIYRFPGLMGKQDVIFTYNPNDFELTYRNEGVWPIRIGLESFTYYRKVHRPEVFGSIGGLVSEQGKDWAHIRNKVNPVQMRVQNVRQNLPQIDQISREFVDKLDTLRDPVTHILNDNFHEQLKMWAFESISFVALNTRMGLLSDRPDPNAARLAEHMTDFFNYSFKYDVQPSIWPYYKTPGFKKFLQTYDKITEITTAYIDEAIKRFEIEKDSGNECVLQQLLSLNKKVAVVMAMYMLMAGIDTTSSAFVTILYHLARNPHKQRQLHRERRRILPDSDEPLTPENTKNMPYLRACIKECMRITSITPGNFRIATKDLVLSGYRVPRGEGVLMGVLELSNSEKYFGQSGQFMPERWLKADTDPDVKACPAARSRNPFVYLAFGFGPRTCIGKRIAELEMETLLTRLLRRYQVSWLAEMPLQYESNIILSPHGIYVQVRAAC.

Position 480 (Cys480) interacts with heme.

It belongs to the cytochrome P450 family. Heme serves as cofactor.

It is found in the mitochondrion. Probably involved in steroid hormones biosynthesis. In Drosophila acanthoptera (Fruit fly), this protein is Cytochrome P450 12b1, mitochondrial (Cyp12b1).